Reading from the N-terminus, the 93-residue chain is Alpha-defensin 22 (93 aa).

The N-terminal stretch at 1 to 19 (MKKLVLLSALVLLAYQVQT) is a signal peptide. Residues 20–58 (DPIQNTDEETNTEEQPGEEDQAVSVSFGGQEGSALHEKL) constitute a propeptide that is removed on maturation. Residues 22–41 (IQNTDEETNTEEQPGEEDQA) form a disordered region. A compositionally biased stretch (acidic residues) spans 25 to 40 (TDEETNTEEQPGEEDQ). Intrachain disulfides connect Cys-64-Cys-89, Cys-66-Cys-81, and Cys-71-Cys-88.

Belongs to the alpha-defensin family.

The protein resides in the secreted. May have microbicidal activities. This is Alpha-defensin 22 (Defa22) from Mus musculus (Mouse).